The primary structure comprises 956 residues: DNA ligase 4 (956 aa).

Glu-307, Lys-309, Ile-310, Arg-314, Glu-371, Phe-409, Glu-476, Lys-481, Lys-498, and Lys-500 together coordinate ATP. Lys-309 serves as the catalytic N6-AMP-lysine intermediate. Residue Glu-371 coordinates Mg(2+). Glu-476 provides a ligand contact to Mg(2+). Residues 666-700 form a disordered region; the sequence is LEDRKRRNAGPGRGAKRLKLANVSSDEDELGTDER. BRCT domains lie at 700 to 793 and 857 to 956; these read RPTS…PRNL and PKGM…DYPL.

It belongs to the ATP-dependent DNA ligase family. It depends on Mg(2+) as a cofactor.

It localises to the nucleus. It carries out the reaction ATP + (deoxyribonucleotide)n-3'-hydroxyl + 5'-phospho-(deoxyribonucleotide)m = (deoxyribonucleotide)n+m + AMP + diphosphate.. Functionally, DNA ligase involved in DNA non-homologous end joining (NHEJ); required for double-strand break (DSB) repair. This is DNA ligase 4 (LIG4) from Yarrowia lipolytica (strain CLIB 122 / E 150) (Yeast).